The following is a 252-amino-acid chain: UPF0246 protein AM1_4276 (252 aa).

It belongs to the UPF0246 family.

This Acaryochloris marina (strain MBIC 11017) protein is UPF0246 protein AM1_4276.